Consider the following 589-residue polypeptide: Formate--tetrahydrofolate ligase (589 aa).

74–81 (TPFGEGKS) contacts ATP.

The protein belongs to the formate--tetrahydrofolate ligase family.

It carries out the reaction (6S)-5,6,7,8-tetrahydrofolate + formate + ATP = (6R)-10-formyltetrahydrofolate + ADP + phosphate. It participates in one-carbon metabolism; tetrahydrofolate interconversion. The sequence is that of Formate--tetrahydrofolate ligase from Thermodesulfovibrio yellowstonii (strain ATCC 51303 / DSM 11347 / YP87).